Here is an 847-residue protein sequence, read N- to C-terminus: Follistatin-related protein 5 (847 aa).

Residues 1–20 (MFRCWSAILILGFIFLASEG) form the signal peptide. Residues 81–135 (ETRHAECACMDLCKQHYKPVCGSDGEFYENHCEVHRAACLKKQKITIVHNEDCFF) form the Kazal-like domain. 3 disulfide bridges follow: C87/C119, C93/C112, and C101/C133. EF-hand domains are found at residues 175 to 210 (RKKP…EELN) and 211 to 246 (KDLS…QVIQ). Ca(2+) contacts are provided by D188, D190, N192, E199, D226, N228, D230, H232, and E237. Ig-like domains lie at 250–338 (PEDQ…FQVN) and 341–426 (PVIR…EDIS). 2 disulfides stabilise this stretch: C270–C321 and C362–C413. N-linked (GlcNAc...) asparagine glycosylation is found at N318 and N394.

Its subcellular location is the secreted. The protein is Follistatin-related protein 5 (Fstl5) of Mus musculus (Mouse).